A 351-amino-acid polypeptide reads, in one-letter code: Thiamine-phosphate synthase (351 aa).

The interval 1–129 is unknown; that stretch reads MVEPYSQQKQ…GQACKQMRYR (129 aa). The interval 130-351 is thiamine-phosphate synthase; sequence VYSLETNLMG…SQLNRIKPES (222 aa). 4-amino-2-methyl-5-(diphosphooxymethyl)pyrimidine-binding positions include 177 to 181 and Asn-209; that span reads QYRDK. Asp-210 and Asp-229 together coordinate Mg(2+). Ser-248 contributes to the 4-amino-2-methyl-5-(diphosphooxymethyl)pyrimidine binding site. 274–276 serves as a coordination point for 2-[(2R,5Z)-2-carboxy-4-methylthiazol-5(2H)-ylidene]ethyl phosphate; that stretch reads TPT. A 4-amino-2-methyl-5-(diphosphooxymethyl)pyrimidine-binding site is contributed by Lys-277. Gly-304 is a 2-[(2R,5Z)-2-carboxy-4-methylthiazol-5(2H)-ylidene]ethyl phosphate binding site.

This sequence belongs to the thiamine-phosphate synthase family. It depends on Mg(2+) as a cofactor.

The enzyme catalyses 2-[(2R,5Z)-2-carboxy-4-methylthiazol-5(2H)-ylidene]ethyl phosphate + 4-amino-2-methyl-5-(diphosphooxymethyl)pyrimidine + 2 H(+) = thiamine phosphate + CO2 + diphosphate. The catalysed reaction is 2-(2-carboxy-4-methylthiazol-5-yl)ethyl phosphate + 4-amino-2-methyl-5-(diphosphooxymethyl)pyrimidine + 2 H(+) = thiamine phosphate + CO2 + diphosphate. It catalyses the reaction 4-methyl-5-(2-phosphooxyethyl)-thiazole + 4-amino-2-methyl-5-(diphosphooxymethyl)pyrimidine + H(+) = thiamine phosphate + diphosphate. It functions in the pathway cofactor biosynthesis; thiamine diphosphate biosynthesis; thiamine phosphate from 4-amino-2-methyl-5-diphosphomethylpyrimidine and 4-methyl-5-(2-phosphoethyl)-thiazole: step 1/1. Functionally, condenses 4-methyl-5-(beta-hydroxyethyl)thiazole monophosphate (THZ-P) and 2-methyl-4-amino-5-hydroxymethyl pyrimidine pyrophosphate (HMP-PP) to form thiamine monophosphate (TMP). In Nostoc sp. (strain PCC 7120 / SAG 25.82 / UTEX 2576), this protein is Thiamine-phosphate synthase.